Here is a 91-residue protein sequence, read N- to C-terminus: Small ribosomal subunit protein uS19 (91 aa).

It belongs to the universal ribosomal protein uS19 family.

Functionally, protein S19 forms a complex with S13 that binds strongly to the 16S ribosomal RNA. The polypeptide is Small ribosomal subunit protein uS19 (Sulfurimonas denitrificans (strain ATCC 33889 / DSM 1251) (Thiomicrospira denitrificans (strain ATCC 33889 / DSM 1251))).